Consider the following 344-residue polypeptide: UDP-glucose 4-epimerase (344 aa).

Residues 15–17, 36–40, 63–64, F85, and K89 each bind NAD(+); these read GYI, DNLSN, and DI. 129–131 is a binding site for substrate; that stretch reads SAT. The Proton acceptor role is filled by Y153. Positions 157 and 181 each coordinate NAD(+). Residues 181–183, 202–204, 220–222, R235, and 297–300 each bind substrate; these read YFN, NNL, SIF, and RKGD.

It belongs to the NAD(P)-dependent epimerase/dehydratase family. As to quaternary structure, homodimer. Requires NAD(+) as cofactor.

It catalyses the reaction UDP-alpha-D-glucose = UDP-alpha-D-galactose. The enzyme catalyses UDP-N-acetyl-alpha-D-glucosamine = UDP-N-acetyl-alpha-D-galactosamine. It participates in carbohydrate metabolism; galactose metabolism. Its function is as follows. Catalyzes two distinct but analogous reactions: the reversible epimerization of UDP-glucose to UDP-galactose and the reversible epimerization of UDP-N-acetylglucosamine to UDP-N-acetylgalactosamine. The reaction with UDP-Gal plays a critical role in the Leloir pathway of galactose catabolism in which galactose is converted to the glycolytic intermediate glucose 6-phosphate. It contributes to the catabolism of dietary galactose and enables the endogenous biosynthesis of both UDP-Gal and UDP-GalNAc when exogenous sources are limited. Both UDP-sugar interconversions are important in the synthesis of glycoproteins and glycolipids. The protein is UDP-glucose 4-epimerase (galE) of Dictyostelium discoideum (Social amoeba).